The sequence spans 456 residues: Flagellum-specific ATP synthase (456 aa).

Position 182–189 (182–189 (AGSGVGKS)) interacts with ATP.

Belongs to the ATPase alpha/beta chains family.

It localises to the cytoplasm. It catalyses the reaction ATP + H2O + 4 H(+)(in) = ADP + phosphate + 5 H(+)(out). Functionally, probable catalytic subunit of a protein translocase for flagellum-specific export, or a proton translocase involved in local circuits at the flagellum. May be involved in a specialized protein export pathway that proceeds without signal peptide cleavage. This is Flagellum-specific ATP synthase (fliI) from Salmonella typhimurium (strain LT2 / SGSC1412 / ATCC 700720).